The primary structure comprises 299 residues: Homoserine O-acetyltransferase (299 aa).

Cysteine 142 acts as the Acyl-thioester intermediate in catalysis. The substrate site is built by lysine 163 and serine 192. Residue histidine 235 is the Proton acceptor of the active site. Residue glutamate 237 is part of the active site. Arginine 249 serves as a coordination point for substrate.

This sequence belongs to the MetA family.

The protein resides in the cytoplasm. It catalyses the reaction L-homoserine + acetyl-CoA = O-acetyl-L-homoserine + CoA. It functions in the pathway amino-acid biosynthesis; L-methionine biosynthesis via de novo pathway; O-acetyl-L-homoserine from L-homoserine: step 1/1. Its function is as follows. Transfers an acetyl group from acetyl-CoA to L-homoserine, forming acetyl-L-homoserine. This chain is Homoserine O-acetyltransferase, found in Synechococcus elongatus (strain ATCC 33912 / PCC 7942 / FACHB-805) (Anacystis nidulans R2).